The following is a 64-amino-acid chain: Small ribosomal subunit protein bS21 (64 aa).

The disordered stretch occupies residues 40 to 64 (PPSVKRKIKSQEAQRRMRRTKRKRF). A compositionally biased stretch (basic residues) spans 55 to 64 (RMRRTKRKRF).

The protein belongs to the bacterial ribosomal protein bS21 family.

This Elusimicrobium minutum (strain Pei191) protein is Small ribosomal subunit protein bS21.